The following is a 372-amino-acid chain: F-box/kelch-repeat protein At5g49000 (372 aa).

A compositionally biased stretch (basic residues) spans 1 to 11 (MSSPERKRKKR). The segment at 1–24 (MSSPERKRKKRSLEPSPESTPNPS) is disordered. The region spanning 19 to 65 (STPNPSLPDDLIVSILARVSRLYYPILSLVSKSSRTLVTSPELYKTR) is the F-box domain. Kelch repeat units follow at residues 131–177 (NIYA…VVDG), 179–224 (IYVA…VIEG), 226–271 (IYIF…LYCY), and 273–312 (PGGIKWYESEKRSWRKLRGLKGLSKLASSCVKLADYGGKM).

The sequence is that of F-box/kelch-repeat protein At5g49000 from Arabidopsis thaliana (Mouse-ear cress).